We begin with the raw amino-acid sequence, 548 residues long: MFS-rype transporter paaT (548 aa).

Basic and acidic residues predominate over residues 1-10 (MEAPRSDQAH). The tract at residues 1–32 (MEAPRSDQAHTDATTPMEAIRTTSLGTNNYGP) is disordered. The span at 21–30 (RTTSLGTNNY) shows a compositional bias: polar residues. 2 N-linked (GlcNAc...) asparagine glycosylation sites follow: N70 and N93. 12 helical membrane-spanning segments follow: residues 100–120 (WYCTMVVAFTCFVVAFCSSVI), 139–159 (LVVITVFVIGFGLGPMVFAPM), 174–194 (ALAVIFVIPCAVSKNIGTLIV), 197–217 (LIDGIAFSAPMTLVGGTLADL), 224–244 (GVPMAAFSAAPFIGPAIGPLV), 256–276 (WLYWIQLILAFVAWVMITFTV), 332–352 (IVLFISLYMSVIYGLLYMFFV), 370–390 (GLMFIPLAIGVIFSACCAPFV), 411–431 (LIPMMWACWCIPSGLFVFAWT), 436–456 (LHWMGPAMGGFLIGVGVILLY), 471–493 (AASALAAKTFIRSIWGACTVLFT), and 505–525 (ASTLLAFIGLACCAIPYVFYF). The Peroxisomal targeting signal signature appears at 258–269 (YWIQLILAFVAW).

This sequence belongs to the major facilitator superfamily. DHA1 family. Polyamines/proton antiporter (TC 2.A.1.2.16) subfamily.

It localises to the peroxisome membrane. In terms of biological role, MFS-type transporter involved in penicillin production, most likely through the translocation of side-chain precursors (phenylacetic acid and phenoxyacetic acid) from the cytosol to the peroxisomal lumen across the peroxisomal membrane. The polypeptide is MFS-rype transporter paaT (Penicillium rubens (strain ATCC 28089 / DSM 1075 / NRRL 1951 / Wisconsin 54-1255) (Penicillium chrysogenum)).